Reading from the N-terminus, the 326-residue chain is D-allose transport system permease protein AlsC (326 aa).

At 1–18 the chain is on the cytoplasmic side; that stretch reads MGFTTRVKSEASEKKPFN. A helical membrane pass occupies residues 19-39; the sequence is FALFWDKYGTFFILAIIVAIF. Topologically, residues 40–70 are periplasmic; it reads GSLSPEYFLTTNNITQIFVQSSVTVLIGMGE. The chain crosses the membrane as a helical span at residues 71–91; that stretch reads FFAILVAGIDLSVGAILALSG. The Cytoplasmic segment spans residues 92–101; sequence MVTAKLMLAG. A helical membrane pass occupies residues 102-122; sequence VDPFLAAMIGGVLVGGALGAI. Topologically, residues 123–124 are periplasmic; that stretch reads NG. The chain crosses the membrane as a helical span at residues 125–145; that stretch reads CLVNWTGLHPFIITLGTNAIF. Over 146-149 the chain is Cytoplasmic; the sequence is RGIT. A helical membrane pass occupies residues 150–170; sequence LVISDANSVYGFSFDFVNFFA. The Periplasmic portion of the chain corresponds to 171-172; sequence AS. The chain crosses the membrane as a helical span at residues 173–193; the sequence is VIGIPVPVIFSLIVALILWFL. The Cytoplasmic segment spans residues 194 to 221; sequence TTRMRLGRNIYALGGNKNSAFYSGIDVK. A helical membrane pass occupies residues 222–242; it reads FHILVVFIISGVCAGLAGVVS. The Periplasmic segment spans residues 243–252; that stretch reads TARLGAAEPL. The helical transmembrane segment at 253–273 threads the bilayer; sequence AGMGFETYAIASAIIGGTSFF. At 274–278 the chain is on the cytoplasmic side; that stretch reads GGKGR. Helical transmembrane passes span 279-299 and 300-320; these read IFSVVIGGLIIGTINNGLNIL and QVQTYYQLVVMGGLIIAAVAL. At 321-326 the chain is on the cytoplasmic side; sequence DRLISK.

Belongs to the binding-protein-dependent transport system permease family. AraH/RbsC subfamily.

It is found in the cell inner membrane. Part of the binding-protein-dependent transport system AlsBAC for D-allose; probably responsible for the translocation of the substrate across the membrane. This is D-allose transport system permease protein AlsC (alsC) from Escherichia coli (strain K12).